The sequence spans 402 residues: Potassium channel subfamily K member 9 (402 aa).

Topologically, residues 1 to 8 (MKRQNVRT) are cytoplasmic. The helical transmembrane segment at 9-29 (LSLIACTFTYLLVGAAVFDAL) threads the bilayer. At 30-88 (ESDHEMREEEKLKAEEVRLRGKYNISSDDYQQLELVILQSEPHRAGVQWKFAGSFYFAI) the chain is on the extracellular side. N-linked (GlcNAc...) asparagine glycosylation occurs at Asn-53. Residues 89 to 101 (TVITTIGYGHAAP) constitute an intramembrane region (pore-forming). The K(+) site is built by Thr-93, Ile-94, Gly-95, and Tyr-96. Residues 93–98 (TIGYGH) are selectivity filter 1. Residues 102-107 (GTDAGK) are Extracellular-facing. Residues 108 to 128 (AFCMFYAVLGIPLTLVMFQSL) traverse the membrane as a helical segment. The Cytoplasmic portion of the chain corresponds to 129–158 (GERMNTFVRYLLKRIKKCCGMRNTEVSMEN). The chain crosses the membrane as a helical span at residues 159-179 (MVTVGFFSCMGTLCLGAAAFS). The Extracellular portion of the chain corresponds to 180–194 (QCEDWSFFHAYYYCF). Positions 195–207 (ITLTTIGFGDFVA) form an intramembrane region, pore-forming. K(+) is bound by residues Thr-199, Ile-200, Gly-201, and Phe-202. Residues 199 to 204 (TIGFGD) form a selectivity filter 2 region. Residues 208–218 (LQAKGALQRKP) lie on the Extracellular side of the membrane. A helical membrane pass occupies residues 219 to 239 (FYVAFSFMYILVGLTVIGAFL). At 240–402 (NLVVLRFLTM…HRLHLRRKSI (163 aa)) the chain is on the cytoplasmic side. The segment at 243 to 248 (VLRFLT) is X-gate.

The protein belongs to the two pore domain potassium channel (TC 1.A.1.8) family. As to quaternary structure, homodimer. Heterodimer with KCNK1. Heterodimer with KCNK3. Expressed in adrenal glands mainly in outer zona glomerulosa and inner zona medullaris. Expressed in retinal ganglion cells. Expressed in dentate gyrus (at protein level).

It localises to the cell membrane. The protein localises to the mitochondrion inner membrane. It is found in the cell projection. The protein resides in the dendrite. It catalyses the reaction K(+)(in) = K(+)(out). The enzyme catalyses Na(+)(in) = Na(+)(out). Inhibited by NTS:NTSR1 signaling in dentate gyrus granule cells. In terms of biological role, k(+) channel that conducts voltage-dependent outward rectifying currents upon membrane depolarization. Voltage sensing is coupled to K(+) electrochemical gradient in an 'ion flux gating' mode where outward but not inward ion flow opens the gate. Changes ion selectivity and becomes permeable to Na(+) ions in response to extracellular acidification. Protonation of the pH sensor His-98 stabilizes C-type inactivation conformation likely converting the channel from outward K(+)-conducting, to inward Na(+)-conducting to nonconductive state. Homo- and heterodimerizes to form functional channels with distinct regulatory and gating properties. Allows K(+) currents with fast-gating kinetics important for the repolarization and hyperpolarization phases of action potentials. In granule neurons, hyperpolarizes the resting membrane potential to limit intrinsic neuronal excitability, but once the action potential threshold is reached, supports high-frequency action potential firing and increased neuronal excitability. Homomeric and/or heteromeric KCNK3:KCNK9 channels operate in cerebellar granule cells, whereas heteromeric KCNK1:KCNK9 enables currents in hippocampal dentate gyrus granule neurons. Dispensable for central chemosensory respiration i.e. breathing controlled by brainstem CO2/pH, it rather conducts pH-sensitive currents and controls the firing rate of serotonergic raphe neurons involved in potentiation of the respiratory chemoreflex. In retinal ganglion cells, mediates outward rectifying currents that regulate action potentials in response to acidification of the synaptic cleft. Involved in transmission of image-forming and nonimage-forming visual information in the retina. In adrenal gland, contributes to the maintenance of a hyperpolarized resting membrane potential of aldosterone-producing cells at zona glomerulosa and limits aldosterone release as part of a regulatory mechanism that controls arterial blood pressure and electrolyte homeostasis. In Mus musculus (Mouse), this protein is Potassium channel subfamily K member 9.